A 408-amino-acid polypeptide reads, in one-letter code: Imidazolonepropionase (408 aa).

The Fe(3+) site is built by histidine 74 and histidine 76. Zn(2+) is bound by residues histidine 74 and histidine 76. Positions 83, 146, and 179 each coordinate 4-imidazolone-5-propanoate. Tyrosine 146 provides a ligand contact to N-formimidoyl-L-glutamate. Histidine 244 contributes to the Fe(3+) binding site. Histidine 244 is a binding site for Zn(2+). Glutamine 247 is a 4-imidazolone-5-propanoate binding site. A Fe(3+)-binding site is contributed by aspartate 319. Aspartate 319 contributes to the Zn(2+) binding site. The N-formimidoyl-L-glutamate site is built by asparagine 321 and glycine 323. Threonine 324 contributes to the 4-imidazolone-5-propanoate binding site.

The protein belongs to the metallo-dependent hydrolases superfamily. HutI family. It depends on Zn(2+) as a cofactor. Fe(3+) serves as cofactor.

The protein resides in the cytoplasm. It carries out the reaction 4-imidazolone-5-propanoate + H2O = N-formimidoyl-L-glutamate. Its pathway is amino-acid degradation; L-histidine degradation into L-glutamate; N-formimidoyl-L-glutamate from L-histidine: step 3/3. Functionally, catalyzes the hydrolytic cleavage of the carbon-nitrogen bond in imidazolone-5-propanoate to yield N-formimidoyl-L-glutamate. It is the third step in the universal histidine degradation pathway. This is Imidazolonepropionase from Ralstonia nicotianae (strain ATCC BAA-1114 / GMI1000) (Ralstonia solanacearum).